The chain runs to 395 residues: Imidazolonepropionase (395 aa).

Fe(3+) is bound by residues H63 and H65. Residues H63 and H65 each contribute to the Zn(2+) site. 4-imidazolone-5-propanoate-binding residues include R72, Y135, and H168. Y135 contributes to the N-formimidoyl-L-glutamate binding site. Position 233 (H233) interacts with Fe(3+). Residue H233 participates in Zn(2+) binding. Position 236 (Q236) interacts with 4-imidazolone-5-propanoate. D308 provides a ligand contact to Fe(3+). D308 contributes to the Zn(2+) binding site. 2 residues coordinate N-formimidoyl-L-glutamate: N310 and G312. Position 313 (T313) interacts with 4-imidazolone-5-propanoate.

It belongs to the metallo-dependent hydrolases superfamily. HutI family. Requires Zn(2+) as cofactor. Fe(3+) serves as cofactor.

It is found in the cytoplasm. The enzyme catalyses 4-imidazolone-5-propanoate + H2O = N-formimidoyl-L-glutamate. It functions in the pathway amino-acid degradation; L-histidine degradation into L-glutamate; N-formimidoyl-L-glutamate from L-histidine: step 3/3. Functionally, catalyzes the hydrolytic cleavage of the carbon-nitrogen bond in imidazolone-5-propanoate to yield N-formimidoyl-L-glutamate. It is the third step in the universal histidine degradation pathway. This Cereibacter sphaeroides (strain ATCC 17029 / ATH 2.4.9) (Rhodobacter sphaeroides) protein is Imidazolonepropionase.